Reading from the N-terminus, the 470-residue chain is Uronate isomerase (470 aa).

The protein belongs to the metallo-dependent hydrolases superfamily. Uronate isomerase family.

The catalysed reaction is D-glucuronate = D-fructuronate. It carries out the reaction aldehydo-D-galacturonate = keto-D-tagaturonate. It functions in the pathway carbohydrate metabolism; pentose and glucuronate interconversion. The polypeptide is Uronate isomerase (Escherichia fergusonii (strain ATCC 35469 / DSM 13698 / CCUG 18766 / IAM 14443 / JCM 21226 / LMG 7866 / NBRC 102419 / NCTC 12128 / CDC 0568-73)).